A 124-amino-acid chain; its full sequence is MSETQDMIRDVQDYPSRLNDPKSKRFETFSYLPQMSAEEIRKQIEYIVSKGWNPAIEHCEPENAILHYWYMWKLPMFGETDVDKIIAEIEACKRSNPNHLIKLIGYDNIRQTQGTAMLVYRPAQ.

The protein belongs to the RuBisCO small chain family. In terms of assembly, heterohexadecamer of 8 large and 8 small subunits.

RuBisCO catalyzes two reactions: the carboxylation of D-ribulose 1,5-bisphosphate, the primary event in carbon dioxide fixation, as well as the oxidative fragmentation of the pentose substrate. Both reactions occur simultaneously and in competition at the same active site. Although the small subunit is not catalytic it is essential for maximal activity. The sequence is that of Ribulose bisphosphate carboxylase small subunit from Hydrogenophilus thermoluteolus (Pseudomonas hydrogenothermophila).